Reading from the N-terminus, the 151-residue chain is Chromophore lyase CpcS/CpeS homolog (151 aa).

The protein belongs to the CpcS/CpeS biliprotein lyase family.

It is found in the plastid. The protein localises to the chloroplast. In terms of biological role, might function to covalently attach a chromophore to Cys residue(s) of phycobiliproteins. The protein is Chromophore lyase CpcS/CpeS homolog of Gracilaria tenuistipitata var. liui (Red alga).